The sequence spans 36 residues: Asteropin-A (36 aa).

Cystine bridges form between Cys-2–Cys-18, Cys-9–Cys-25, and Cys-17–Cys-35.

Functionally, sialidase inhibitor. Competitively inhibits bacterial sialidases, but not viral sialidases. Does not inhibit glycosidases or proteases. Has no antitumor activity. This is Asteropin-A from Asteropus simplex (Marine sponge).